An 874-amino-acid chain; its full sequence is DNA mismatch repair protein MutS (874 aa).

Residue 613–620 coordinates ATP; it reads GPNMGGKS. Residues 799-820 form a disordered region; the sequence is EAGSTPSPAPVSVNEPKPAAPT.

The protein belongs to the DNA mismatch repair MutS family.

This protein is involved in the repair of mismatches in DNA. It is possible that it carries out the mismatch recognition step. This protein has a weak ATPase activity. This is DNA mismatch repair protein MutS from Marinobacter nauticus (strain ATCC 700491 / DSM 11845 / VT8) (Marinobacter aquaeolei).